The primary structure comprises 316 residues: Lipoyl synthase (316 aa).

The segment covering 1–15 has biased composition (basic and acidic residues); sequence MKARNESMSKGEYKT. A disordered region spans residues 1–33; it reads MKARNESMSKGEYKTKSLKNRPDPTQPKLKKPS. [4Fe-4S] cluster-binding residues include C64, C69, C75, C90, C94, C97, and S304. Residues 76 to 293 form the Radical SAM core domain; it reads FGHGTATFMI…EQAGMEMGFT (218 aa).

Belongs to the radical SAM superfamily. Lipoyl synthase family. [4Fe-4S] cluster is required as a cofactor.

The protein localises to the cytoplasm. It catalyses the reaction [[Fe-S] cluster scaffold protein carrying a second [4Fe-4S](2+) cluster] + N(6)-octanoyl-L-lysyl-[protein] + 2 oxidized [2Fe-2S]-[ferredoxin] + 2 S-adenosyl-L-methionine + 4 H(+) = [[Fe-S] cluster scaffold protein] + N(6)-[(R)-dihydrolipoyl]-L-lysyl-[protein] + 4 Fe(3+) + 2 hydrogen sulfide + 2 5'-deoxyadenosine + 2 L-methionine + 2 reduced [2Fe-2S]-[ferredoxin]. The protein operates within protein modification; protein lipoylation via endogenous pathway; protein N(6)-(lipoyl)lysine from octanoyl-[acyl-carrier-protein]: step 2/2. In terms of biological role, catalyzes the radical-mediated insertion of two sulfur atoms into the C-6 and C-8 positions of the octanoyl moiety bound to the lipoyl domains of lipoate-dependent enzymes, thereby converting the octanoylated domains into lipoylated derivatives. The chain is Lipoyl synthase from Hydrogenovibrio crunogenus (strain DSM 25203 / XCL-2) (Thiomicrospira crunogena).